The sequence spans 269 residues: Fructose-2,6-bisphosphatase TIGAR (269 aa).

His-11 (tele-phosphohistidine intermediate) is an active-site residue. Catalysis depends on Glu-89, which acts as the Proton donor/acceptor.

This sequence belongs to the phosphoglycerate mutase family. Interacts with HK2; the interaction increases hexokinase HK2 activity in a hypoxia- and HIF1A-dependent manner, resulting in the regulation of mitochondrial membrane potential, thus increasing NADPH production and decreasing intracellular ROS levels. Expressed in olfactory bulb, cerebellum, and cortex. Expressed in neurons and astrocytes (at protein level). Expressed in intestinal crypt.

It is found in the cytoplasm. The protein localises to the nucleus. The protein resides in the mitochondrion. The catalysed reaction is beta-D-fructose 2,6-bisphosphate + H2O = beta-D-fructose 6-phosphate + phosphate. Fructose-bisphosphatase hydrolyzing fructose-2,6-bisphosphate as well as fructose-1,6-bisphosphate. Acts as a negative regulator of glycolysis by lowering intracellular levels of fructose-2,6-bisphosphate in a p53/TP53-dependent manner, resulting in the pentose phosphate pathway (PPP) activation and NADPH production. Contributes to the generation of reduced glutathione to cause a decrease in intracellular reactive oxygen species (ROS) content, correlating with its ability to protect cells from oxidative or metabolic stress-induced cell death. Plays a role in promoting protection against cell death during hypoxia by decreasing mitochondria ROS levels in a HK2-dependent manner through a mechanism that is independent of its fructose-bisphosphatase activity. In response to cardiac damage stress, mediates p53-induced inhibition of myocyte mitophagy through ROS levels reduction and the subsequent inactivation of BNIP3. Reduced mitophagy results in an enhanced apoptotic myocyte cell death, and exacerbates cardiac damage. Plays a role in adult intestinal regeneration; contributes to the growth, proliferation and survival of intestinal crypts following tissue ablation. Plays a neuroprotective role against ischemic brain damage by enhancing PPP flux and preserving mitochondria functions. Protects glioma cells from hypoxia- and ROS-induced cell death by inhibiting glycolysis and activating mitochondrial energy metabolism and oxygen consumption in a TKTL1-dependent and p53/TP53-independent manner. Plays a role in cancer cell survival by promoting DNA repair through activating PPP flux in a CDK5-ATM-dependent signaling pathway during hypoxia and/or genome stress-induced DNA damage responses. Involved in intestinal tumor progression. This is Fructose-2,6-bisphosphatase TIGAR from Mus musculus (Mouse).